A 476-amino-acid chain; its full sequence is Protein transport protein Sec61 subunit alpha (476 aa).

The Cytoplasmic segment spans residues 2–33; sequence GIKFLEFIKPFCAVLPEIQKPERKIQFREKVL. Residues 34-53 traverse the membrane as a helical segment; it reads WTAITLFIFLVCCQIPLFGI. Over 54–76 the chain is Lumenal; it reads MSSDSADPFYWMRVILASNRGTL. The helical transmembrane segment at 77–96 threads the bilayer; the sequence is MELGIAPIVTSGLIMQLLAG. Residues 97-117 are Cytoplasmic-facing; that stretch reads AKIIEVGDTPKDRALFNGAQK. The chain crosses the membrane as a helical span at residues 118–138; the sequence is LFGMIITIGQAIVYVMTGMYG. Over 139-144 the chain is Lumenal; sequence DPSEMG. The helical transmembrane segment at 145 to 165 threads the bilayer; sequence AGICLLIIIQLFVAGLIVLLL. Residues 166–172 are Cytoplasmic-facing; it reads DELLQKG. A helical membrane pass occupies residues 173–193; sequence YGLGSGISLFIATNICETIVW. Over 194-240 the chain is Lumenal; that stretch reads KAFGPTTVNTGRGTEFEGAIIALFHLLATRTDKVRALREAFYRQNLP. Residues 241-261 form a helical membrane-spanning segment; the sequence is NLMNLIATVFVFAVVIYFQGF. Residues 262-288 are Cytoplasmic-facing; that stretch reads RVDLPIKSARYRGQYNTYPIKLFYTSN. The chain crosses the membrane as a helical span at residues 289–309; the sequence is IPIILQSALVSNLYVISQMLS. The Lumenal portion of the chain corresponds to 310-354; sequence TRFSGNFLVNLLGTWSDATTSGPARAYPVAGLCYYLSPPESFGSV. Residues 355–375 traverse the membrane as a helical segment; the sequence is LDDPVHAVIYIVFMLGSCAFF. Residues 376 to 420 are Cytoplasmic-facing; it reads SKTWIEVSGSSAKDVAKQLKEQQMVMRGHRETSMVHELNRYIPTA. The helical transmembrane segment at 421–441 threads the bilayer; that stretch reads AAFGGLCIGGLSVMADFLGAI. The Lumenal portion of the chain corresponds to 442–445; sequence GSGT. Residues 446–462 traverse the membrane as a helical segment; it reads GILLAVTIIYQYFEIFV. Topologically, residues 463-476 are cytoplasmic; it reads KEQSEVGSMGALLF.

The protein belongs to the SecY/SEC61-alpha family. As to quaternary structure, the SEC61 channel-forming translocon complex consists of channel-forming core components SEC61A1, SEC61B and SEC61G and different auxiliary components such as SEC62 and SEC63. The SEC61 channel associates with the multi-pass translocon (MPT) complex.

Its subcellular location is the endoplasmic reticulum membrane. In terms of biological role, component of SEC61 channel-forming translocon complex that mediates transport of signal peptide-containing precursor polypeptides across the endoplasmic reticulum (ER). Forms a ribosome receptor and a gated pore in the ER membrane, both functions required for cotranslational translocation of nascent polypeptides. May cooperate with auxiliary protein SEC62, SEC63 and HSPA5/BiP to enable post-translational transport of small presecretory proteins. The SEC61 channel is also involved in ER membrane insertion of transmembrane proteins: it mediates membrane insertion of the first few transmembrane segments of proteins, while insertion of subsequent transmembrane regions of multi-pass membrane proteins is mediated by the multi-pass translocon (MPT) complex. The sequence is that of Protein transport protein Sec61 subunit alpha (sec61a) from Bovichtus variegatus (Thornfish).